The following is a 276-amino-acid chain: Ribosomal RNA large subunit methyltransferase E (276 aa).

Residues G52, F54, D72, D90, and D114 each contribute to the S-adenosyl-L-methionine site. K154 (proton acceptor) is an active-site residue. Low complexity predominate over residues 203–249 (RAAPTANATPTPTSTSTSTPTSTSTPTSTSTSTPAPTLTQTQTQTPK). The segment at 203–276 (RAAPTANATP…AKTGASRRTR (74 aa)) is disordered. Positions 265–276 (AKAKTGASRRTR) are enriched in basic residues.

It belongs to the class I-like SAM-binding methyltransferase superfamily. RNA methyltransferase RlmE family.

The protein resides in the cytoplasm. The catalysed reaction is uridine(2552) in 23S rRNA + S-adenosyl-L-methionine = 2'-O-methyluridine(2552) in 23S rRNA + S-adenosyl-L-homocysteine + H(+). In terms of biological role, specifically methylates the uridine in position 2552 of 23S rRNA at the 2'-O position of the ribose in the fully assembled 50S ribosomal subunit. The sequence is that of Ribosomal RNA large subunit methyltransferase E from Anaeromyxobacter sp. (strain Fw109-5).